The sequence spans 426 residues: Pyrophosphate--fructose 6-phosphate 1-phosphotransferase 1 (426 aa).

G15 is a binding site for diphosphate. Mg(2+) is bound at residue D114. Substrate-binding positions include 140–142 (TID), 186–188 (MGR), E247, and 308–311 (YELR). The Proton acceptor role is filled by D142.

It belongs to the phosphofructokinase type A (PFKA) family. PPi-dependent PFK group II subfamily. Clade 'Short' sub-subfamily. In terms of assembly, homotetramer. Mg(2+) serves as cofactor.

The protein localises to the cytoplasm. The catalysed reaction is beta-D-fructose 6-phosphate + diphosphate = beta-D-fructose 1,6-bisphosphate + phosphate + H(+). Its pathway is carbohydrate degradation; glycolysis; D-glyceraldehyde 3-phosphate and glycerone phosphate from D-glucose: step 3/4. Non-allosteric. Catalyzes the phosphorylation of D-fructose 6-phosphate, the first committing step of glycolysis. Uses inorganic phosphate (PPi) as phosphoryl donor instead of ATP like common ATP-dependent phosphofructokinases (ATP-PFKs), which renders the reaction reversible, and can thus function both in glycolysis and gluconeogenesis. Consistently, PPi-PFK can replace the enzymes of both the forward (ATP-PFK) and reverse (fructose-bisphosphatase (FBPase)) reactions. The protein is Pyrophosphate--fructose 6-phosphate 1-phosphotransferase 1 (Pfk1) of Trichomonas vaginalis (strain ATCC PRA-98 / G3).